A 636-amino-acid polypeptide reads, in one-letter code: Eisosome protein sle1 (636 aa).

The segment at 1–297 (MSHASKNYNA…HVIIYENKEG (297 aa)) is required for targeting the protein to eisosomes. Disordered regions lie at residues 111 to 205 (ANYM…SPAN), 222 to 284 (YSPS…VPPV), 313 to 387 (DPSG…TQHF), 400 to 451 (QYYQ…QPSL), 467 to 550 (DITP…VNNA), and 572 to 604 (PSNH…RFAN). Polar residues-rich tracts occupy residues 131 to 159 (PSQQ…QSYQ), 166 to 178 (RTSQ…NNYS), 188 to 204 (RRSS…GSPA), 237 to 255 (SYNN…TQKS), and 315 to 354 (SGSN…VVSR). A compositionally biased stretch (low complexity) spans 355–383 (SGQNNNQPAQPGQYNQQSQPVQSYQSGQS). Composition is skewed to polar residues over residues 400–412 (QYYQ…QPVQ) and 422–439 (PVQS…QPVQ). Residues 471–484 (TASSTTANNAYASA) show a composition bias toward low complexity. A compositionally biased stretch (basic and acidic residues) spans 503-512 (SFERERDSGR). Over residues 572–589 (PSNHAYSEGRSYTFTGGQ) the composition is skewed to polar residues.

Component of eisosomes, large cytoplasmic protein assemblies that localize to specialized domains termed MCCs on the plasma membrane.

Its subcellular location is the cytoplasm. The protein resides in the cell cortex. It is found in the cell tip. Important for the biogenesis of filamentous eisosomes, large cytoplasmic protein assemblies that localize to specialized domains on the plasma membrane to cluster specific proteins at sites of membrane invaginations. The chain is Eisosome protein sle1 (sle1) from Schizosaccharomyces pombe (strain 972 / ATCC 24843) (Fission yeast).